Reading from the N-terminus, the 229-residue chain is MNVEEMKKAVAKEALKFIEDEMVVGLGTGSTTAYFINYLGKLLMEGELEDVYGVPTSHQARLLALEAGIPVVSLDEVDAIDIAVDGADEVDPHMNLIKGRGAALTMEKIIEYRAGMFIVLVDESKLVEYLGQKMPVPIEVIPAAWRAIAEELEVFNATAELRMAVKKDGPVVTDNGNFILDAKFARIEDPLDLEIELNTIPGVVENGIFADIADIILVGTPEGVKRMER.

Substrate-binding positions include 28–31 (TGST), 85–88 (DGAD), and 98–101 (KGRG). Residue Glu107 is the Proton acceptor of the active site. Lys125 contributes to the substrate binding site.

The protein belongs to the ribose 5-phosphate isomerase family. In terms of assembly, homodimer.

It carries out the reaction aldehydo-D-ribose 5-phosphate = D-ribulose 5-phosphate. The protein operates within carbohydrate degradation; pentose phosphate pathway; D-ribose 5-phosphate from D-ribulose 5-phosphate (non-oxidative stage): step 1/1. Its function is as follows. Catalyzes the reversible conversion of ribose-5-phosphate to ribulose 5-phosphate. This Thermococcus kodakarensis (strain ATCC BAA-918 / JCM 12380 / KOD1) (Pyrococcus kodakaraensis (strain KOD1)) protein is Ribose-5-phosphate isomerase A.